Consider the following 219-residue polypeptide: Protein-L-isoaspartate O-methyltransferase (219 aa).

Ser-60 is a catalytic residue.

Belongs to the methyltransferase superfamily. L-isoaspartyl/D-aspartyl protein methyltransferase family.

The protein resides in the cytoplasm. The enzyme catalyses [protein]-L-isoaspartate + S-adenosyl-L-methionine = [protein]-L-isoaspartate alpha-methyl ester + S-adenosyl-L-homocysteine. In terms of biological role, catalyzes the methyl esterification of L-isoaspartyl residues in peptides and proteins that result from spontaneous decomposition of normal L-aspartyl and L-asparaginyl residues. It plays a role in the repair and/or degradation of damaged proteins. This chain is Protein-L-isoaspartate O-methyltransferase, found in Rhodospirillum rubrum (strain ATCC 11170 / ATH 1.1.1 / DSM 467 / LMG 4362 / NCIMB 8255 / S1).